We begin with the raw amino-acid sequence, 269 residues long: GTP cyclohydrolase FolE2 (269 aa).

Belongs to the GTP cyclohydrolase IV family.

It carries out the reaction GTP + H2O = 7,8-dihydroneopterin 3'-triphosphate + formate + H(+). It participates in cofactor biosynthesis; 7,8-dihydroneopterin triphosphate biosynthesis; 7,8-dihydroneopterin triphosphate from GTP: step 1/1. Its function is as follows. Converts GTP to 7,8-dihydroneopterin triphosphate. In Burkholderia thailandensis (strain ATCC 700388 / DSM 13276 / CCUG 48851 / CIP 106301 / E264), this protein is GTP cyclohydrolase FolE2.